A 426-amino-acid polypeptide reads, in one-letter code: Serine/threonine-protein kinase ssn3 (426 aa).

The region spanning 41-368 is the Protein kinase domain; sequence YHIVGFISSG…AREALEHPYF (328 aa). ATP contacts are provided by residues 47–55 and K71; that span reads ISSGTYGRV. D173 serves as the catalytic Proton acceptor. A disordered region spans residues 390–426; the sequence is RVTQDDNDIRSGSLPGTKRSGLPDDSLMGRAAKRLKE.

The protein belongs to the protein kinase superfamily. CMGC Ser/Thr protein kinase family. CDC2/CDKX subfamily. Component of the srb8-11 complex, a regulatory module of the Mediator complex. Mg(2+) is required as a cofactor.

The protein resides in the nucleus. The catalysed reaction is L-seryl-[protein] + ATP = O-phospho-L-seryl-[protein] + ADP + H(+). The enzyme catalyses L-threonyl-[protein] + ATP = O-phospho-L-threonyl-[protein] + ADP + H(+). It catalyses the reaction [DNA-directed RNA polymerase] + ATP = phospho-[DNA-directed RNA polymerase] + ADP + H(+). Component of the srb8-11 complex. The srb8-11 complex is a regulatory module of the Mediator complex which is itself involved in regulation of basal and activated RNA polymerase II-dependent transcription. The srb8-11 complex may be involved in the transcriptional repression of a subset of genes regulated by Mediator. It may inhibit the association of the Mediator complex with RNA polymerase II to form the holoenzyme complex. The srb8-11 complex phosphorylates the C-terminal domain (CTD) of the largest subunit of RNA polymerase II. The polypeptide is Serine/threonine-protein kinase ssn3 (ssn3) (Aspergillus fumigatus (strain ATCC MYA-4609 / CBS 101355 / FGSC A1100 / Af293) (Neosartorya fumigata)).